Consider the following 1269-residue polypeptide: Furin-like protease 1, isoforms 1/1-X/2 (1269 aa).

The interval 1-57 (MKNDVVRWSRQPTSNTTNSSSSSRSDSNSTHKHRSKSNKLNARQLGSNAARSCQQRS) is disordered. The span at 13–28 (TSNTTNSSSSSRSDSN) shows a compositional bias: low complexity. N-linked (GlcNAc...) asparagine glycosylation is found at asparagine 15, asparagine 18, and asparagine 28. The span at 38 to 57 (NKLNARQLGSNAARSCQQRS) shows a compositional bias: polar residues. Residue asparagine 108 is glycosylated (N-linked (GlcNAc...) asparagine). Residues 119-139 (VFLLALQFSAVVFLCNINVGF) traverse the membrane as a helical segment. Residues 150 to 163 (SAGGSSPAAPSSAP) are compositionally biased toward low complexity. A disordered region spans residues 150–187 (SAGGSSPAAPSSAPSSPPTVAVPPPPPPSSALKVDPNG). The span at 164 to 178 (SSPPTVAVPPPPPPS) shows a compositional bias: pro residues. Asparagine 333 carries an N-linked (GlcNAc...) asparagine glycan. The Peptidase S8 domain occupies 340–654 (MWYLNRGGGL…YGLMDAAEMV (315 aa)). Active-site charge relay system residues include aspartate 372 and histidine 413. Residue asparagine 426 is glycosylated (N-linked (GlcNAc...) asparagine). Disulfide bonds link cysteine 430-cysteine 579 and cysteine 522-cysteine 552. The active-site Charge relay system is the serine 587. Asparagine 606 carries an N-linked (GlcNAc...) asparagine glycan. Residues 662-793 (AVPEQQRCEI…SLIFYGTTQS (132 aa)) form the P/Homo B domain. Cysteine 669 and cysteine 695 form a disulfide bridge. N-linked (GlcNAc...) asparagine glycans are attached at residues asparagine 727 and asparagine 814. Disordered stretches follow at residues 796–875 (PNDP…PPKQ), 891–1015 (ANGK…NSRI), 1031–1050 (ELEP…AKQG), and 1057–1083 (LFKP…PSQT). Composition is skewed to low complexity over residues 811 to 821 (TTPNSSSTTSN) and 835 to 851 (PNNF…LPLG). A glycan (N-linked (GlcNAc...) asparagine) is linked at asparagine 857. Residues 858–868 (KSSYVTNNPLL) are compositionally biased toward polar residues. N-linked (GlcNAc...) asparagine glycans are attached at residues asparagine 897 and asparagine 908. Low complexity-rich tracts occupy residues 905 to 915 (NKGNKSNNGNK) and 929 to 940 (TTQSTIIQTSTS). Over residues 975–985 (KSYDEKSRKVV) the composition is skewed to basic and acidic residues. Asparagine 994 is a glycosylation site (N-linked (GlcNAc...) asparagine). A compositionally biased stretch (polar residues) spans 1005–1014 (ESTTTSSNSR). Residues 1062 to 1074 (NGGNSRQGNTKKS) show a composition bias toward polar residues. The helical transmembrane segment at 1233–1253 (LGLSLLFFMIMQVFFLNFKHA) threads the bilayer.

It belongs to the peptidase S8 family. Furin subfamily. Ca(2+) serves as cofactor. As to expression, in adults, isoform 1-X is expressed in CNS, fat body and female reproductive tissues, and in embryos, in CNS, tracheal pits, hindgut, posterior spiracles and anal pads.

The protein resides in the golgi apparatus membrane. The enzyme catalyses Release of mature proteins from their proproteins by cleavage of -Arg-Xaa-Yaa-Arg-|-Zaa- bonds, where Xaa can be any amino acid and Yaa is Arg or Lys. Releases albumin, complement component C3 and von Willebrand factor from their respective precursors.. Furin is likely to represent the ubiquitous endoprotease activity within constitutive secretory pathways and capable of cleavage at the RX(K/R)R consensus motif. The sequence is that of Furin-like protease 1, isoforms 1/1-X/2 (Fur1) from Drosophila melanogaster (Fruit fly).